Here is a 215-residue protein sequence, read N- to C-terminus: MSRFTYAYMMMTRLETLKNNLQAAFGQDLALTESLGELTLEVAAEQWFSACTKLRTDPALRFESCIDLCGVDYLTWGNGTQPEEKTGPVTHGRYAVVVHLLSIEHNWRLRVRTWAPDDEFPMVSSLLECWPGVNWFEREAFDLYGIVFEGHPDLRRILTDYGFIGHPFRKDFPLSGTVEMRYDPEQKRVIYQPVTIDPREITPRVVREGSYGMGR.

It belongs to the complex I 30 kDa subunit family. NDH-1 is composed of 14 different subunits. Subunits NuoB, C, D, E, F, and G constitute the peripheral sector of the complex.

Its subcellular location is the cell inner membrane. It catalyses the reaction a quinone + NADH + 5 H(+)(in) = a quinol + NAD(+) + 4 H(+)(out). Functionally, NDH-1 shuttles electrons from NADH, via FMN and iron-sulfur (Fe-S) centers, to quinones in the respiratory chain. The immediate electron acceptor for the enzyme in this species is believed to be ubiquinone. Couples the redox reaction to proton translocation (for every two electrons transferred, four hydrogen ions are translocated across the cytoplasmic membrane), and thus conserves the redox energy in a proton gradient. This chain is NADH-quinone oxidoreductase subunit C, found in Bordetella parapertussis (strain 12822 / ATCC BAA-587 / NCTC 13253).